Here is a 284-residue protein sequence, read N- to C-terminus: uncharacterized protein (284 aa).

Positions 1–20 (MLHNIQSILQFLLFVSSVQA) are cleaved as a signal peptide. In terms of domain architecture, Apple spans 38-121 (CFEFKKNYWI…FTVNFFRNIC (84 aa)). Disulfide bonds link Cys-38–Cys-121, Cys-63–Cys-89, and Cys-67–Cys-77. N-linked (GlcNAc...) asparagine glycosylation is present at Asn-256. The helical transmembrane segment at 264-284 (SSTGLKFTTGLLIILVVFLFL) threads the bilayer.

The protein localises to the membrane. This is an uncharacterized protein from Caenorhabditis elegans.